Consider the following 159-residue polypeptide: Transcription elongation factor GreA (159 aa).

Positions 44-75 (SENAEYDAAREQQSQTEARIADLENKLSTATI) form a coiled coil.

This sequence belongs to the GreA/GreB family.

Its function is as follows. Necessary for efficient RNA polymerase transcription elongation past template-encoded arresting sites. The arresting sites in DNA have the property of trapping a certain fraction of elongating RNA polymerases that pass through, resulting in locked ternary complexes. Cleavage of the nascent transcript by cleavage factors such as GreA or GreB allows the resumption of elongation from the new 3'terminus. GreA releases sequences of 2 to 3 nucleotides. The sequence is that of Transcription elongation factor GreA from Chlorobium limicola (strain DSM 245 / NBRC 103803 / 6330).